The following is a 492-amino-acid chain: ATP synthase subunit beta, plastid (492 aa).

Position 170 to 177 (170 to 177 (GGAGVGKT)) interacts with ATP.

This sequence belongs to the ATPase alpha/beta chains family. As to quaternary structure, F-type ATPases have 2 components, CF(1) - the catalytic core - and CF(0) - the membrane proton channel. CF(1) has five subunits: alpha(3), beta(3), gamma(1), delta(1), epsilon(1). CF(0) has four main subunits: a(1), b(1), b'(1) and c(9-12).

The protein localises to the plastid membrane. The catalysed reaction is ATP + H2O + 4 H(+)(in) = ADP + phosphate + 5 H(+)(out). Functionally, produces ATP from ADP in the presence of a proton gradient across the membrane. The catalytic sites are hosted primarily by the beta subunits. The chain is ATP synthase subunit beta, plastid from Aneura mirabilis (Parasitic liverwort).